We begin with the raw amino-acid sequence, 107 residues long: Toluene 1,2-dioxygenase system ferredoxin subunit (107 aa).

One can recognise a Rieske domain in the interval 4 to 99; that stretch reads TYILRQGDLP…IKVEGDEVHV (96 aa). Positions 43, 45, 62, and 65 each coordinate [2Fe-2S] cluster.

It belongs to the bacterial ring-hydroxylating dioxygenase ferredoxin component family. As to quaternary structure, this dioxygenase system consists of four proteins: the two subunits of the hydroxylase component (todC1 and todC2), a ferredoxin (TodB) and a ferredoxin reductase (TodA).

Its pathway is xenobiotic degradation; toluene degradation. Functionally, this protein seems to be a 2Fe-2S ferredoxin. This chain is Toluene 1,2-dioxygenase system ferredoxin subunit (todB), found in Pseudomonas putida (strain ATCC 700007 / DSM 6899 / JCM 31910 / BCRC 17059 / LMG 24140 / F1).